Consider the following 872-residue polypeptide: Alanine--tRNA ligase (872 aa).

Positions 567, 571, 669, and 673 each coordinate Zn(2+).

It belongs to the class-II aminoacyl-tRNA synthetase family. Zn(2+) is required as a cofactor.

Its subcellular location is the cytoplasm. The enzyme catalyses tRNA(Ala) + L-alanine + ATP = L-alanyl-tRNA(Ala) + AMP + diphosphate. Functionally, catalyzes the attachment of alanine to tRNA(Ala) in a two-step reaction: alanine is first activated by ATP to form Ala-AMP and then transferred to the acceptor end of tRNA(Ala). Also edits incorrectly charged Ser-tRNA(Ala) and Gly-tRNA(Ala) via its editing domain. The chain is Alanine--tRNA ligase from Streptococcus pneumoniae serotype 4 (strain ATCC BAA-334 / TIGR4).